We begin with the raw amino-acid sequence, 204 residues long: Small ribosomal subunit protein uS4 (204 aa).

A disordered region spans residues Ser25–Tyr47. One can recognise an S4 RNA-binding domain in the interval Arg93–Ala156.

This sequence belongs to the universal ribosomal protein uS4 family. In terms of assembly, part of the 30S ribosomal subunit. Contacts protein S5. The interaction surface between S4 and S5 is involved in control of translational fidelity.

Its function is as follows. One of the primary rRNA binding proteins, it binds directly to 16S rRNA where it nucleates assembly of the body of the 30S subunit. In terms of biological role, with S5 and S12 plays an important role in translational accuracy. This is Small ribosomal subunit protein uS4 from Rhodospirillum centenum (strain ATCC 51521 / SW).